The following is a 397-amino-acid chain: Elongation factor Tu (397 aa).

The 197-residue stretch at 10 to 206 (KPHVNVGTIG…TMDTYFPQPE (197 aa)) folds into the tr-type G domain. The tract at residues 19–26 (GHVDHGKT) is G1. A GTP-binding site is contributed by 19–26 (GHVDHGKT). Thr-26 serves as a coordination point for Mg(2+). The segment at 60-64 (GITIA) is G2. Residues 81-84 (DCPG) form a G3 region. Residues 81 to 85 (DCPGH) and 136 to 139 (NKAD) contribute to the GTP site. Residues 136–139 (NKAD) form a G4 region. The tract at residues 174–176 (SAL) is G5.

This sequence belongs to the TRAFAC class translation factor GTPase superfamily. Classic translation factor GTPase family. EF-Tu/EF-1A subfamily. As to quaternary structure, monomer.

It localises to the cytoplasm. It catalyses the reaction GTP + H2O = GDP + phosphate + H(+). Functionally, GTP hydrolase that promotes the GTP-dependent binding of aminoacyl-tRNA to the A-site of ribosomes during protein biosynthesis. The polypeptide is Elongation factor Tu (Coxiella burnetii (strain Dugway 5J108-111)).